A 408-amino-acid chain; its full sequence is Glutaryl-CoA dehydrogenase, mitochondrial (408 aa).

The N-terminal 13 residues, 1-13 (KGGKTQGRSAKSS), are a transit peptide targeting the mitochondrion. Substrate is bound by residues 107–108 (RS) and serine 156. Residues 147–156 (FGLTEPNHGS), serine 156, and 182–184 (WIT) contribute to the FAD site. Lysine 210 is modified (N6-acetyllysine). 257 to 264 (FGCLNNAR) serves as a coordination point for substrate. Residues arginine 289, glutamine 300, and 357 to 361 (DMLGG) each bind FAD. Catalysis depends on glutamate 384, which acts as the Proton acceptor. Glycine 385 is a substrate binding site. FAD is bound by residues threonine 386, 386-388 (THD), and phenylalanine 404.

The protein belongs to the acyl-CoA dehydrogenase family. In terms of assembly, homotetramer. Requires FAD as cofactor.

The protein resides in the mitochondrion matrix. The catalysed reaction is glutaryl-CoA + oxidized [electron-transfer flavoprotein] + 2 H(+) = (2E)-butenoyl-CoA + reduced [electron-transfer flavoprotein] + CO2. It functions in the pathway amino-acid metabolism; lysine degradation. Its pathway is amino-acid metabolism; tryptophan metabolism. Functionally, catalyzes the oxidative decarboxylation of glutaryl-CoA to crotonyl-CoA and CO(2) in the degradative pathway of L-lysine, L-hydroxylysine, and L-tryptophan metabolism. It uses electron transfer flavoprotein as its electron acceptor. The polypeptide is Glutaryl-CoA dehydrogenase, mitochondrial (GCDH) (Sus scrofa (Pig)).